A 475-amino-acid chain; its full sequence is Glycogen synthase (475 aa).

Lys15 contributes to the ADP-alpha-D-glucose binding site.

Belongs to the glycosyltransferase 1 family. Bacterial/plant glycogen synthase subfamily.

It catalyses the reaction [(1-&gt;4)-alpha-D-glucosyl](n) + ADP-alpha-D-glucose = [(1-&gt;4)-alpha-D-glucosyl](n+1) + ADP + H(+). It functions in the pathway glycan biosynthesis; glycogen biosynthesis. Synthesizes alpha-1,4-glucan chains using ADP-glucose. This chain is Glycogen synthase, found in Anaeromyxobacter dehalogenans (strain 2CP-C).